Reading from the N-terminus, the 586-residue chain is MKQSVSAEQIELKSSLPGSKKVYVDGPREGMKVPMREIEQSDTNGVPNPPIRVYDTSGPYTDPAYKVELEKGIPTPRHSWILERGDVEAYEGREVKPEDDGVKVASKHTPVFPQMDRKPLRAKQGANVTQMHYARNGIITSEMEYVAIREGVDPEFVRKEIAEGRAILPANINHPEAELMIIGRNFHVKVNANIGNSAVSSSIAEEVEKMTWATRWGADTIMDLSTGKNIHTTREWIIRNAPVPVGTVPIYQALEKVNGIAEDLTWEVYRDTLIEQAEQGVDYFTIHAGVLLRYIPITAKRTTGIVSRGGSIMAQWCLFHHKENFLYTHFEEICEIMKQYDVSFSLGDGLRPGSIADANDEAQFSELETLGELTKIAWKHDVQVMIEGPGHVPMHLIKENMEKELDICQGAPFYTLGPLTTDIAPGYDHITSAIGAAMIGWFGTAMLCYVTPKEHLGLPNKDDVREGVITYKIAAHAADLAKGHKTAHQRDDALSKARFEFRWRDQFNLSLDPERAMEYHDETLPAEGAKTAHFCSMCGPKFCSMRISHDIREYAKENDLETTEAIEKGMKEKAKEFKETGSHLYQ.

Positions 1 to 58 (MKQSVSAEQIELKSSLPGSKKVYVDGPREGMKVPMREIEQSDTNGVPNPPIRVYDTSG) are disordered. Residues 22 to 39 (VYVDGPREGMKVPMREIE) are compositionally biased toward basic and acidic residues. Residues asparagine 193, methionine 222, tyrosine 251, histidine 287, 307-309 (SRG), 348-351 (DGLR), and glutamate 387 each bind substrate. Residue histidine 391 participates in Zn(2+) binding. Position 414 (tyrosine 414) interacts with substrate. Residue histidine 455 coordinates Zn(2+). Positions 535, 538, and 543 each coordinate [4Fe-4S] cluster.

The protein belongs to the ThiC family. It depends on [4Fe-4S] cluster as a cofactor.

The enzyme catalyses 5-amino-1-(5-phospho-beta-D-ribosyl)imidazole + S-adenosyl-L-methionine = 4-amino-2-methyl-5-(phosphooxymethyl)pyrimidine + CO + 5'-deoxyadenosine + formate + L-methionine + 3 H(+). It functions in the pathway cofactor biosynthesis; thiamine diphosphate biosynthesis. In terms of biological role, catalyzes the synthesis of the hydroxymethylpyrimidine phosphate (HMP-P) moiety of thiamine from aminoimidazole ribotide (AIR) in a radical S-adenosyl-L-methionine (SAM)-dependent reaction. The polypeptide is Phosphomethylpyrimidine synthase (Bacillus thuringiensis (strain Al Hakam)).